The sequence spans 429 residues: Glutamate-1-semialdehyde 2,1-aminomutase 1 (429 aa).

K268 carries the N6-(pyridoxal phosphate)lysine modification.

The protein belongs to the class-III pyridoxal-phosphate-dependent aminotransferase family. HemL subfamily. In terms of assembly, homodimer. Pyridoxal 5'-phosphate serves as cofactor.

It localises to the cytoplasm. The catalysed reaction is (S)-4-amino-5-oxopentanoate = 5-aminolevulinate. The protein operates within porphyrin-containing compound metabolism; protoporphyrin-IX biosynthesis; 5-aminolevulinate from L-glutamyl-tRNA(Glu): step 2/2. The sequence is that of Glutamate-1-semialdehyde 2,1-aminomutase 1 from Staphylococcus saprophyticus subsp. saprophyticus (strain ATCC 15305 / DSM 20229 / NCIMB 8711 / NCTC 7292 / S-41).